Consider the following 195-residue polypeptide: Molybdenum cofactor guanylyltransferase (195 aa).

Residues 10-12 (LAG), Lys-23, Asn-51, Asp-69, and Asp-99 each bind GTP. A Mg(2+)-binding site is contributed by Asp-99.

Belongs to the MobA family. In terms of assembly, monomer. It depends on Mg(2+) as a cofactor.

The protein resides in the cytoplasm. It catalyses the reaction Mo-molybdopterin + GTP + H(+) = Mo-molybdopterin guanine dinucleotide + diphosphate. Transfers a GMP moiety from GTP to Mo-molybdopterin (Mo-MPT) cofactor (Moco or molybdenum cofactor) to form Mo-molybdopterin guanine dinucleotide (Mo-MGD) cofactor. The sequence is that of Molybdenum cofactor guanylyltransferase from Yersinia pseudotuberculosis serotype O:1b (strain IP 31758).